Here is a 420-residue protein sequence, read N- to C-terminus: Probable 3-isopropylmalate dehydratase large subunit (420 aa).

Positions 301, 361, and 364 each coordinate [4Fe-4S] cluster.

The protein belongs to the aconitase/IPM isomerase family. LeuC type 2 subfamily. In terms of assembly, heterodimer of LeuC and LeuD. The cofactor is [4Fe-4S] cluster.

It catalyses the reaction (2R,3S)-3-isopropylmalate = (2S)-2-isopropylmalate. It participates in amino-acid biosynthesis; L-leucine biosynthesis; L-leucine from 3-methyl-2-oxobutanoate: step 2/4. In terms of biological role, catalyzes the isomerization between 2-isopropylmalate and 3-isopropylmalate, via the formation of 2-isopropylmaleate. The protein is Probable 3-isopropylmalate dehydratase large subunit of Methanosarcina mazei (strain ATCC BAA-159 / DSM 3647 / Goe1 / Go1 / JCM 11833 / OCM 88) (Methanosarcina frisia).